A 136-amino-acid polypeptide reads, in one-letter code: DUF35 domain-containing scaffold protein (136 aa).

Zn(2+)-binding residues include Cys25, Cys38, and Cys41.

Belongs to the scaffold protein DUF35 family. In terms of assembly, interacts with acetoacetyl-CoA thiolase and HMG-CoA synthase (HMGCS) that catalyzes the first and second step in the mevalonate pathway, respectively.

Functions as a scaffold to connect the acetoacetyl-CoA thiolase and HMG-CoA synthase (HMGCS) dimers in the channeling thiolase/HMGCS complex, which allows for efficient coupling of the endergonic thiolase reaction with the exergonic HMGCS reaction. In Pyrococcus furiosus (strain ATCC 43587 / DSM 3638 / JCM 8422 / Vc1), this protein is DUF35 domain-containing scaffold protein.